Consider the following 362-residue polypeptide: Protein ABHD12B (362 aa).

Belongs to the serine esterase family.

The chain is Protein ABHD12B from Homo sapiens (Human).